A 167-amino-acid polypeptide reads, in one-letter code: Ribosome maturation factor RimM (167 aa).

The 75-residue stretch at 92–166 (DDEFYHTDLI…RIVADPPEGL (75 aa)) folds into the PRC barrel domain.

This sequence belongs to the RimM family. In terms of assembly, binds ribosomal protein uS19.

Its subcellular location is the cytoplasm. An accessory protein needed during the final step in the assembly of 30S ribosomal subunit, possibly for assembly of the head region. Essential for efficient processing of 16S rRNA. May be needed both before and after RbfA during the maturation of 16S rRNA. It has affinity for free ribosomal 30S subunits but not for 70S ribosomes. The chain is Ribosome maturation factor RimM from Ruegeria pomeroyi (strain ATCC 700808 / DSM 15171 / DSS-3) (Silicibacter pomeroyi).